Here is a 417-residue protein sequence, read N- to C-terminus: MSSSPAQTPSRRPSLLGGSMIIAGTAVGAGMFSLPIAMSGIWFGWSVAVFLLTWFCMLLSGMMILEANLNYPVGSSFSTITRDLLGQGWNVVNGLSIAFVLYILTYAYISGGGSIIGYTLSSGLGVTLPEKLAGLLFALAVALVVWWSTRAVDRITTLMLGGMIITFGLSISGLLGRIQPAILFNSGEPDAVYWPYLLATLPFCLTSFGYHGNVPSLMKYYGKDPQRISRSLWIGTLIALAIYLLWQASTLGTIPREQFKGIIAGGSNVGTLVEYLHRITASDSLNALLTTFSNLAVASSFLGVTLGLFDYLADLCRFDDSHFGRFKTALLTFVPPTIGGLLFPNGFIYAIGFAGLAAAFWAVIVPALMARASRKRFGSPLFRAWGGTPAIVLVLLFGVANAVAHILASLHWLPEYR.

At threonine 8 the chain carries Phosphothreonine. Helical transmembrane passes span 16-36 (LGGS…SLPI), 40-60 (GIWF…MLLS), 97-117 (IAFV…SIIG), 126-146 (VTLP…LVVW), 155-175 (ITTL…SGLL), 191-211 (AVYW…FGYH), 232-252 (LWIG…STLG), 295-315 (LAVA…LADL), 326-346 (FKTA…FPNG), 347-367 (FIYA…IVPA), and 390-410 (AIVL…LASL).

The protein belongs to the amino acid/polyamine transporter 2 family. Mtr/TnaB/TyrP permease subfamily.

It is found in the cell inner membrane. It localises to the secreted. It catalyses the reaction L-tryptophan(in) + H(+)(in) = L-tryptophan(out) + H(+)(out). Involved in the transport of tryptophan into the cell. The protein is Tryptophan-specific transport protein (mtr) of Pseudomonas aeruginosa (strain UCBPP-PA14).